The following is a 235-amino-acid chain: Rab-like protein 3 (235 aa).

Residues 1–235 are small GTPase-like; sequence MASLDRVKVL…GGNFKSLHYD (235 aa). GTP is bound by residues 16-21, 148-150, and 179-180; these read GVGKSS, KLD, and DC.

Belongs to the small GTPase superfamily. Rab family. Homodimer.

In terms of biological role, required for KRAS signaling regulation and modulation of cell proliferation. Regulator of KRAS prenylation, and probably prenylation of other small GTPases. Required for lymphocyte development and function. Not required for myeloid cell development. The sequence is that of Rab-like protein 3 (rabl3) from Xenopus tropicalis (Western clawed frog).